We begin with the raw amino-acid sequence, 224 residues long: ATP-dependent dethiobiotin synthetase BioD (224 aa).

Position 14-19 (14-19 (GIGKTV)) interacts with ATP. Thr-18 lines the Mg(2+) pocket. The active site involves Lys-39. Residue Ser-43 coordinates substrate. ATP-binding positions include Asp-56, 117 to 120 (EGVG), and 177 to 178 (NE). Mg(2+) contacts are provided by Asp-56 and Glu-117.

The protein belongs to the dethiobiotin synthetase family. In terms of assembly, homodimer. It depends on Mg(2+) as a cofactor.

It localises to the cytoplasm. It catalyses the reaction (7R,8S)-7,8-diammoniononanoate + CO2 + ATP = (4R,5S)-dethiobiotin + ADP + phosphate + 3 H(+). Its pathway is cofactor biosynthesis; biotin biosynthesis; biotin from 7,8-diaminononanoate: step 1/2. Its function is as follows. Catalyzes a mechanistically unusual reaction, the ATP-dependent insertion of CO2 between the N7 and N8 nitrogen atoms of 7,8-diaminopelargonic acid (DAPA, also called 7,8-diammoniononanoate) to form a ureido ring. In Xanthomonas campestris pv. campestris (strain ATCC 33913 / DSM 3586 / NCPPB 528 / LMG 568 / P 25), this protein is ATP-dependent dethiobiotin synthetase BioD.